A 347-amino-acid polypeptide reads, in one-letter code: Hydroxymethylglutaryl-CoA synthase (347 aa).

The (3S)-3-hydroxy-3-methylglutaryl-CoA site is built by Asp29 and Ala30. The active-site Proton donor/acceptor is the Glu80. (3S)-3-hydroxy-3-methylglutaryl-CoA-binding residues include Cys112 and Thr153. Residue Cys112 is the Acyl-thioester intermediate of the active site. Arg199 serves as a coordination point for CoA. (3S)-3-hydroxy-3-methylglutaryl-CoA contacts are provided by Thr201 and His234. His234 functions as the Proton donor/acceptor in the catalytic mechanism. Lys239 is a binding site for CoA. 3 residues coordinate (3S)-3-hydroxy-3-methylglutaryl-CoA: Arg243, Asn266, and Ser296.

Belongs to the thiolase-like superfamily. Archaeal HMG-CoA synthase family. In terms of assembly, interacts with acetoacetyl-CoA thiolase that catalyzes the precedent step in the pathway and with a DUF35 protein. The acetoacetyl-CoA thiolase/HMG-CoA synthase complex channels the intermediate via a fused CoA-binding site, which allows for efficient coupling of the endergonic thiolase reaction with the exergonic HMGCS reaction.

It carries out the reaction acetoacetyl-CoA + acetyl-CoA + H2O = (3S)-3-hydroxy-3-methylglutaryl-CoA + CoA + H(+). The protein operates within metabolic intermediate biosynthesis; (R)-mevalonate biosynthesis; (R)-mevalonate from acetyl-CoA: step 2/3. Functionally, catalyzes the condensation of acetyl-CoA with acetoacetyl-CoA to form 3-hydroxy-3-methylglutaryl-CoA (HMG-CoA). Functions in the mevalonate (MVA) pathway leading to isopentenyl diphosphate (IPP), a key precursor for the biosynthesis of isoprenoid compounds that are building blocks of archaeal membrane lipids. This is Hydroxymethylglutaryl-CoA synthase from Methanocella arvoryzae (strain DSM 22066 / NBRC 105507 / MRE50).